Consider the following 412-residue polypeptide: Multifunctional CCA protein (412 aa).

Residues Gly8 and Arg11 each coordinate ATP. CTP is bound by residues Gly8 and Arg11. Residues Asp21 and Asp23 each coordinate Mg(2+). Arg91, Arg137, and Arg140 together coordinate ATP. Positions 91, 137, and 140 each coordinate CTP. One can recognise an HD domain in the interval 228–329 (TGIHTLMTLS…VKLFDSIDAW (102 aa)).

It belongs to the tRNA nucleotidyltransferase/poly(A) polymerase family. Bacterial CCA-adding enzyme type 1 subfamily. Monomer. Can also form homodimers and oligomers. It depends on Mg(2+) as a cofactor. Ni(2+) is required as a cofactor.

The catalysed reaction is a tRNA precursor + 2 CTP + ATP = a tRNA with a 3' CCA end + 3 diphosphate. The enzyme catalyses a tRNA with a 3' CCA end + 2 CTP + ATP = a tRNA with a 3' CCACCA end + 3 diphosphate. Catalyzes the addition and repair of the essential 3'-terminal CCA sequence in tRNAs without using a nucleic acid template. Adds these three nucleotides in the order of C, C, and A to the tRNA nucleotide-73, using CTP and ATP as substrates and producing inorganic pyrophosphate. tRNA 3'-terminal CCA addition is required both for tRNA processing and repair. Also involved in tRNA surveillance by mediating tandem CCA addition to generate a CCACCA at the 3' terminus of unstable tRNAs. While stable tRNAs receive only 3'-terminal CCA, unstable tRNAs are marked with CCACCA and rapidly degraded. The protein is Multifunctional CCA protein of Escherichia coli (strain SMS-3-5 / SECEC).